Here is a 269-residue protein sequence, read N- to C-terminus: Hydroxyethylthiazole kinase (269 aa).

M41 contacts substrate. 2 residues coordinate ATP: R117 and S163. G190 is a binding site for substrate.

It belongs to the Thz kinase family. Mg(2+) serves as cofactor.

It carries out the reaction 5-(2-hydroxyethyl)-4-methylthiazole + ATP = 4-methyl-5-(2-phosphooxyethyl)-thiazole + ADP + H(+). Its pathway is cofactor biosynthesis; thiamine diphosphate biosynthesis; 4-methyl-5-(2-phosphoethyl)-thiazole from 5-(2-hydroxyethyl)-4-methylthiazole: step 1/1. Catalyzes the phosphorylation of the hydroxyl group of 4-methyl-5-beta-hydroxyethylthiazole (THZ). The chain is Hydroxyethylthiazole kinase from Latilactobacillus sakei subsp. sakei (strain 23K) (Lactobacillus sakei subsp. sakei).